A 312-amino-acid chain; its full sequence is Cathepsin O (312 aa).

The signal sequence occupies residues 1–23; the sequence is MKPQLVNLLLLCCCCLGRHGVAG. Positions 24-98 are cleaved as a propeptide — activation peptide; that stretch reads TWSWSHQREA…EGQRPIPNVS (75 aa). N-linked (GlcNAc...) asparagine glycans are attached at residues Asn-53 and Asn-96. Cystine bridges form between Cys-120/Cys-161, Cys-154/Cys-195, and Cys-253/Cys-301. Cys-123 is an active-site residue. Catalysis depends on residues His-260 and Asn-280.

This sequence belongs to the peptidase C1 family.

The protein resides in the lysosome. The enzyme catalyses The recombinant human enzyme hydrolyzes synthetic endopeptidase substrates including Z-Phe-Arg-NHMec and Z-Arg-Arg-NHMec.. Proteolytic enzyme possibly involved in normal cellular protein degradation and turnover. The chain is Cathepsin O (Ctso) from Mus musculus (Mouse).